We begin with the raw amino-acid sequence, 362 residues long: MKASILTKLEMLVERYEEVQHLLGDPGVIGDQDKFRALSKEYSQLEEVTKCFTAYKQAQEDLVAAEEMAKEDDAEMREMAQEEIKAAKVAIEDLAAELQILLLPKDPNDDRNCFLEIRAGAGGDEAGIFAGDLFRMYSKFAEKRGWRIEVMSANEAEHGGYKEMIAKVNGDGAYGFLKFESGGHRVQRVPATESQGRVHTSACTVAIMPEIPEAEIPEIKASDLKIDTFRSSGAGGQHVNTTDSAIRITHLPTGTVVECQDERSQHKNKAKAMAVLAARIVQAEEAKRAAEVSDTRRNLLGSGDRSDRIRTYNYPQGRVSDHRINLTIYRLSEVMEGDLQSLIDPVIQEHQADQLAALAENN.

Residue Gln237 is modified to N5-methylglutamine.

The protein belongs to the prokaryotic/mitochondrial release factor family. Methylated by PrmC. Methylation increases the termination efficiency of RF1.

It localises to the cytoplasm. In terms of biological role, peptide chain release factor 1 directs the termination of translation in response to the peptide chain termination codons UAG and UAA. In Vibrio vulnificus (strain CMCP6), this protein is Peptide chain release factor 1.